The following is a 166-amino-acid chain: Immunity protein RhsIB (166 aa).

In terms of biological role, immunity component of a toxin-immunity protein module, which functions as a cellular contact-dependent growth inhibition (CDI) system. Specifically inhibits its cognate toxin RhsB. Cell contact is necessary for growth inhibition. This Dickeya dadantii (strain 3937) (Erwinia chrysanthemi (strain 3937)) protein is Immunity protein RhsIB (rhsIB).